We begin with the raw amino-acid sequence, 289 residues long: NADPH-dependent 7-cyano-7-deazaguanine reductase (289 aa).

81–83 (IES) is a substrate binding site. 83 to 84 (SK) lines the NADPH pocket. Cysteine 196 serves as the catalytic Thioimide intermediate. Aspartate 203 acts as the Proton donor in catalysis. A substrate-binding site is contributed by 235-236 (HE). Residue 264–265 (RG) coordinates NADPH.

The protein belongs to the GTP cyclohydrolase I family. QueF type 2 subfamily. Homodimer.

It localises to the cytoplasm. It carries out the reaction 7-aminomethyl-7-carbaguanine + 2 NADP(+) = 7-cyano-7-deazaguanine + 2 NADPH + 3 H(+). The protein operates within tRNA modification; tRNA-queuosine biosynthesis. In terms of biological role, catalyzes the NADPH-dependent reduction of 7-cyano-7-deazaguanine (preQ0) to 7-aminomethyl-7-deazaguanine (preQ1). The protein is NADPH-dependent 7-cyano-7-deazaguanine reductase of Albidiferax ferrireducens (strain ATCC BAA-621 / DSM 15236 / T118) (Rhodoferax ferrireducens).